We begin with the raw amino-acid sequence, 269 residues long: Phosphate import ATP-binding protein PstB 1 (269 aa).

The ABC transporter domain occupies 23 to 264 (LSTEDLNVYY…PKIKAAEDYV (242 aa)). Position 55–62 (55–62 (GASGSGKS)) interacts with ATP.

The protein belongs to the ABC transporter superfamily. Phosphate importer (TC 3.A.1.7) family. As to quaternary structure, the complex is composed of two ATP-binding proteins (PstB), two transmembrane proteins (PstC and PstA) and a solute-binding protein (PstS).

Its subcellular location is the cell membrane. The catalysed reaction is phosphate(out) + ATP + H2O = ADP + 2 phosphate(in) + H(+). Functionally, part of the ABC transporter complex PstSACB involved in phosphate import. Responsible for energy coupling to the transport system. The sequence is that of Phosphate import ATP-binding protein PstB 1 from Latilactobacillus sakei subsp. sakei (strain 23K) (Lactobacillus sakei subsp. sakei).